We begin with the raw amino-acid sequence, 737 residues long: Transcriptional repressor CTCF (737 aa).

M1 is subject to N-acetylmethionine. K18 participates in a covalent cross-link: Glycyl lysine isopeptide (Lys-Gly) (interchain with G-Cter in SUMO2). K74 participates in a covalent cross-link: Glycyl lysine isopeptide (Lys-Gly) (interchain with G-Cter in SUMO). Positions 180–211 (QGELPPQEDPSWQKDPDYQPPAKKTKKTKKSK) are disordered. The segment covering 202–211 (KKTKKTKKSK) has biased composition (basic residues). A Glycyl lysine isopeptide (Lys-Gly) (interchain with G-Cter in SUMO2) cross-link involves residue K219. The C2H2-type 1 zinc-finger motif lies at 266–288 (FQCELCSYTCPRRSNLDRHMKSH). T289 is subject to Phosphothreonine. A C2H2-type 2 zinc finger spans residues 294-316 (HKCHLCGRAFRTVTLLRNHLNTH). Position 317 is a phosphothreonine (T317). 2 consecutive C2H2-type zinc fingers follow at residues 322–345 (HKCPDCDMAFVTSGELVRHRRYKH) and 351–373 (FKCSMCDYASVEVSKLKRHIRSH). A Phosphothreonine modification is found at T374. The C2H2-type 5 zinc-finger motif lies at 379–401 (FQCSLCSYASRDTYKLKRHMRTH). S402 carries the phosphoserine modification. 5 C2H2-type zinc fingers span residues 407-430 (YECYICHARFTQSGTMKMHILQKH), 437-460 (FHCPHCDTVIARKSDLGVHLRKQH), 467-489 (KKCRYCDAVFHERYALIQHQKSH), 495-517 (FKCDQCDYACRQERHMIMHKRTH), and 523-546 (YACSHCDKTFRQKQLLDMHFKRYH). The C2H2-type 11; atypical zinc finger occupies 555–577 (FVCSKCGKTFTRRNTMARHADNC). 2 disordered regions span residues 573–687 (HADN…EDQN) and 699–727 (KKEPDAEPAEGEEEEAQAAPADAPNGDLT). Over residues 593–604 (KSKRGRKRKMRS) the composition is skewed to basic residues. Phosphoserine occurs at positions 609, 610, and 612. Residues 610–636 (SDSENAEPDLDDNEEEEEPAVEIEPEP) are compositionally biased toward acidic residues. A compositionally biased stretch (pro residues) spans 637–657 (EPQPQPQPQPQPQPVAPAPPP). Polar residues predominate over residues 668 to 687 (RTNQPKQNQPTAIIQVEDQN). A Glycyl lysine isopeptide (Lys-Gly) (interchain with G-Cter in SUMO); alternate cross-link involves residue K699. Residue K699 forms a Glycyl lysine isopeptide (Lys-Gly) (interchain with G-Cter in SUMO2); alternate linkage. Residues 704–714 (AEPAEGEEEEA) show a composition bias toward acidic residues.

It belongs to the CTCF zinc-finger protein family. In terms of assembly, interacts with CHD8. Interacts with LLPH. Interacts with CENPE. Interacts with BRD2; promoting BRD2 recruitment to chromatin. Sumoylated on Lys-74 and Lys-699; sumoylation of CTCF contributes to the repressive function of CTCF on the MYC P2 promoter.

Its subcellular location is the nucleus. The protein localises to the nucleoplasm. It localises to the chromosome. The protein resides in the centromere. Functionally, chromatin binding factor that binds to DNA sequence specific sites and regulates the 3D structure of chromatin. Binds together strands of DNA, thus forming chromatin loops, and anchors DNA to cellular structures, such as the nuclear lamina. Defines the boundaries between active and heterochromatic DNA via binding to chromatin insulators, thereby preventing interaction between promoter and nearby enhancers and silencers. Plays a critical role in the epigenetic regulation. Participates in the allele-specific gene expression at the imprinted IGF2/H19 gene locus. On the maternal allele, binding within the H19 imprinting control region (ICR) mediates maternally inherited higher-order chromatin conformation to restrict enhancer access to IGF2. Mediates interchromosomal association between IGF2/H19 and WSB1/NF1 and may direct distant DNA segments to a common transcription factory. Regulates asynchronous replication of IGF2/H19. Plays a critical role in gene silencing over considerable distances in the genome. Preferentially interacts with unmethylated DNA, preventing spreading of CpG methylation and maintaining methylation-free zones. Inversely, binding to target sites is prevented by CpG methylation. Plays an important role in chromatin remodeling. Can dimerize when it is bound to different DNA sequences, mediating long-range chromatin looping. Causes local loss of histone acetylation and gain of histone methylation in the beta-globin locus, without affecting transcription. When bound to chromatin, it provides an anchor point for nucleosomes positioning. Seems to be essential for homologous X-chromosome pairing. May participate with Tsix in establishing a regulatable epigenetic switch for X chromosome inactivation. May play a role in preventing the propagation of stable methylation at the escape genes from X-inactivation. Involved in sister chromatid cohesion. Associates with both centromeres and chromosomal arms during metaphase and required for cohesin localization to CTCF sites. Plays a role in the recruitment of CENPE to the pericentromeric/centromeric regions of the chromosome during mitosis. Acts as a transcriptional repressor binding to promoters of vertebrate MYC gene and BAG1 gene. Also binds to the PLK and PIM1 promoters. Acts as a transcriptional activator of APP. Regulates APOA1/C3/A4/A5 gene cluster and controls MHC class II gene expression. Plays an essential role in oocyte and preimplantation embryo development by activating or repressing transcription. Seems to act as tumor suppressor. This is Transcriptional repressor CTCF (Ctcf) from Rattus norvegicus (Rat).